The primary structure comprises 463 residues: MQFRIEHDTMGEIKVDDSQYWGAQTQRSLENFKIGTEKMPKELIGAFAKLKRSLAVVNHKLGKLSLEKSQAIIKACDCILKGELCGEFPLAIWQTGSGTQTNMNLNEVIANKATEILGGNFREKKLIHPNDDVNMSQSSNDTFPTAMHVVSVLEITHKLLPSLENLLKTFKEKSQQFKEIVKIGRTHLQDATPLTLGQEFSGYASMLEHSKQQILESLEHLRELAIGGTAVGTGLNAHKELSEKVAEELSQFSGVKFISAPNKFHALTSHDAIAYAHGAFKALAANLMKIANDIRWLASGPRCGLGELNIPENEPGSSIMPGKVNPTQCEAMTMVAVQVMGNDTAIGIAASQGNFELNVFKPVIIYNFLQSLRLLSDSMESFNIHCASGIEPNKEKIDYYLHHSLMLVTALNPHVGYENAAKIAKNAHKKGISLKESALELKLLSAEDFDQFVVPEKMIGPKA.

Residues 97-99 (SGT), 128-131 (HPND), 138-140 (SSN), and Thr-186 contribute to the substrate site. The active-site Proton donor/acceptor is His-187. Ser-317 is a catalytic residue. Substrate contacts are provided by residues Ser-318 and 323–325 (KVN).

Belongs to the class-II fumarase/aspartase family. Fumarase subfamily. As to quaternary structure, homotetramer.

It localises to the cytoplasm. The enzyme catalyses (S)-malate = fumarate + H2O. Its pathway is carbohydrate metabolism; tricarboxylic acid cycle; (S)-malate from fumarate: step 1/1. Involved in the TCA cycle. Catalyzes the stereospecific interconversion of fumarate to L-malate. This is Fumarate hydratase class II from Helicobacter pylori (strain J99 / ATCC 700824) (Campylobacter pylori J99).